The following is a 516-amino-acid chain: Probable D,D-dipeptide-binding periplasmic protein DdpA (516 aa).

The first 25 residues, 1–25 (MKRSISFRPTLLALVLATNFPVAHA), serve as a signal peptide directing secretion.

Belongs to the bacterial solute-binding protein 5 family. As to quaternary structure, the complex is composed of two ATP-binding proteins (DdpD and DdpF), two transmembrane proteins (DdpB and DdpC) and a solute-binding protein (DdpA).

The protein resides in the periplasm. Its function is as follows. Part of the ABC transporter complex DdpABCDF, which is probably involved in D,D-dipeptide transport. This is Probable D,D-dipeptide-binding periplasmic protein DdpA (ddpA) from Escherichia coli (strain K12).